A 176-amino-acid chain; its full sequence is Ribosome rescue factor SmrB (176 aa).

The region spanning 93-168 is the Smr domain; that stretch reads LDLHGYRQSE…GDAALLVLID (76 aa).

This sequence belongs to the SmrB family. As to quaternary structure, associates with collided ribosomes, but not with correctly translating polysomes.

In terms of biological role, acts as a ribosome collision sensor. Detects stalled/collided disomes (pairs of ribosomes where the leading ribosome is stalled and a second ribosome has collided with it) and endonucleolytically cleaves mRNA at the 5' boundary of the stalled ribosome. Stalled/collided disomes form a new interface (primarily via the 30S subunits) that binds SmrB. Cleaved mRNA becomes available for tmRNA ligation, leading to ribosomal subunit dissociation and rescue of stalled ribosomes. This Shewanella sp. (strain W3-18-1) protein is Ribosome rescue factor SmrB.